The following is a 304-amino-acid chain: Quinolinate synthase (304 aa).

Residues His24 and Ser41 each coordinate iminosuccinate. [4Fe-4S] cluster is bound at residue Cys86. Residues Tyr112–Asn114 and Ser129 each bind iminosuccinate. Cys171 is a binding site for [4Fe-4S] cluster. Residues His197–Glu199 and Thr214 contribute to the iminosuccinate site. Residue Cys259 participates in [4Fe-4S] cluster binding.

This sequence belongs to the quinolinate synthase family. Type 2 subfamily. It depends on [4Fe-4S] cluster as a cofactor.

The protein resides in the cytoplasm. It carries out the reaction iminosuccinate + dihydroxyacetone phosphate = quinolinate + phosphate + 2 H2O + H(+). It functions in the pathway cofactor biosynthesis; NAD(+) biosynthesis; quinolinate from iminoaspartate: step 1/1. Functionally, catalyzes the condensation of iminoaspartate with dihydroxyacetone phosphate to form quinolinate. The protein is Quinolinate synthase of Geobacter sp. (strain M21).